The primary structure comprises 160 residues: Cytochrome b6-f complex subunit 4 (160 aa).

3 helical membrane passes run 36–56 (LLYV…GLSV), 95–115 (LLGV…PFIE), and 131–151 (LTFI…CVPI).

The protein belongs to the cytochrome b family. PetD subfamily. The 4 large subunits of the cytochrome b6-f complex are cytochrome b6, subunit IV (17 kDa polypeptide, petD), cytochrome f and the Rieske protein, while the 4 small subunits are petG, petL, petM and petN. The complex functions as a dimer.

Its subcellular location is the plastid. The protein localises to the chloroplast thylakoid membrane. Functionally, component of the cytochrome b6-f complex, which mediates electron transfer between photosystem II (PSII) and photosystem I (PSI), cyclic electron flow around PSI, and state transitions. The sequence is that of Cytochrome b6-f complex subunit 4 from Phaeodactylum tricornutum (strain CCAP 1055/1).